Here is a 48-residue protein sequence, read N- to C-terminus: Large ribosomal subunit protein eL40 (48 aa).

Belongs to the eukaryotic ribosomal protein eL40 family.

The chain is Large ribosomal subunit protein eL40 from Methanoculleus marisnigri (strain ATCC 35101 / DSM 1498 / JR1).